The following is a 112-amino-acid chain: UPF0060 membrane protein Daro_2632 (112 aa).

The next 4 helical transmembrane spans lie at 7-27 (VLGL…LPWL), 34-54 (PVWL…LLTL), 59-79 (AGRI…IWLW), and 89-109 (WDLV…LQPA).

Belongs to the UPF0060 family.

The protein resides in the cell inner membrane. The polypeptide is UPF0060 membrane protein Daro_2632 (Dechloromonas aromatica (strain RCB)).